A 505-amino-acid polypeptide reads, in one-letter code: MAQVINTNSLSLLTQNNLNKSQSSLSSAIERLSSGLRINSAKDDAAGQAIANRFTSNIKGLTQASRNANDGISIAQTTEGALNEINNNLQRVRELSVQATNGTNSDSDLKSIQDEIQQRLEEIDRVSNQTQFNGVKVLSQDNQMKIQVGANDGETITIDLQKIDVKSLGLDGFNVNGPKEATVGDLKSSFKNVTGYDTYAAGADKYRVDINSGAVVTDAAAPDKVYVNAANGQLTTDDAENNTAVDLFKTTKSTAGTAEAKAIAGAIKGGKEGDTFDYKGVTFTIDTKTGDDGNGKVSTTINGEKVTLTVADIATGATDVNAATLQSSKNVYTSVVNGQFTFDDKTKNESAKLSDLEANNAVKGESKITVNGAEYTANATGDKITLAGKTMFIDKTASGVSTLINEDAAAAKKSTANPLASIDSALSKVDAVRSSLGAIQNRFDSAITNLGNTVTNLNSARSRIEDADYATEVSNMSKAQILQQAGTSVLAQANQVPQNVLSLLR.

Belongs to the bacterial flagellin family.

It localises to the secreted. The protein localises to the bacterial flagellum. Functionally, flagellin is the subunit protein which polymerizes to form the filaments of bacterial flagella. In Salmonella enteritidis, this protein is Flagellin (fliC).